The primary structure comprises 515 residues: Galactose/methyl galactoside import ATP-binding protein MglA (515 aa).

ABC transporter domains lie at 8–243 and 254–499; these read LEMR…VGRE and IPKE…AKYL. 40–47 provides a ligand contact to ATP; the sequence is GENGAGKS.

The protein belongs to the ABC transporter superfamily. Galactose/methyl galactoside importer (TC 3.A.1.2.3) family. As to quaternary structure, the complex is composed of one ATP-binding protein (MglA), two transmembrane proteins (MglC) and a solute-binding protein (MglB).

It is found in the cell membrane. It carries out the reaction D-galactose(out) + ATP + H2O = D-galactose(in) + ADP + phosphate + H(+). The catalysed reaction is methyl beta-D-galactoside(out) + ATP + H2O = methyl beta-D-galactoside(in) + ADP + phosphate + H(+). Part of the ABC transporter complex MglABC involved in galactose/methyl galactoside import. Responsible for energy coupling to the transport system. This is Galactose/methyl galactoside import ATP-binding protein MglA from Clostridium perfringens (strain 13 / Type A).